The sequence spans 156 residues: Radiation-inducible immediate-early gene IEX-1 (156 aa).

A disordered region spans residues 1 to 62; sequence MCHSRSCHPT…SASRGHRKRS (62 aa). The Cytoplasmic portion of the chain corresponds to 1–82; sequence MCHSRSCHPT…RQLPVEEPNP (82 aa). Thr18 is modified (phosphothreonine; by MAPK1). Ser31 bears the Phosphoserine mark. The span at 44 to 55 shows a compositional bias: low complexity; it reads PAAAPAGRPSAS. A helical; Signal-anchor for type II membrane protein membrane pass occupies residues 83–99; it reads AKRLLFLLLTIVFCQIL. At 100–156 the chain is on the extracellular side; sequence MAEEGVPAPLPPEDAPNAASLAPTPVSAVLEPFNLTSEPSDYALDLSTFLQQHPAAF. Thr123 is modified (phosphothreonine; by MAPK1). Ser126 carries the phosphoserine; by MAPK1 modification. An N-linked (GlcNAc...) asparagine glycan is attached at Asn133.

The protein belongs to the IER3 family. In terms of assembly, interacts with the PPP2R5C-PP2A holoenzyme and ERK kinases; regulates ERK dephosphorylation. Phosphorylated at Thr-18, Thr-123 and Ser-126 by MAPK1/ERK2 and probably MAPK3/ERK1. Upon phosphorylation by MAPK1/ERK2 and MAPK3/ERK1, acquires the ability to inhibit cell death induced by various stimuli. In terms of processing, glycosylated.

Its subcellular location is the membrane. Functionally, may play a role in the ERK signaling pathway by inhibiting the dephosphorylation of ERK by phosphatase PP2A-PPP2R5C holoenzyme. Also acts as an ERK downstream effector mediating survival. As a member of the NUPR1/RELB/IER3 survival pathway, may provide pancreatic ductal adenocarcinoma with remarkable resistance to cell stress, such as starvation or gemcitabine treatment. In Homo sapiens (Human), this protein is Radiation-inducible immediate-early gene IEX-1 (IER3).